Here is a 347-residue protein sequence, read N- to C-terminus: Photosystem II protein D1 (347 aa).

The next 3 helical transmembrane spans lie at 31-48 (YIGW…LAII), 120-135 (HFIG…EWEF), and 144-158 (WIYL…AATA). Position 120 (His-120) interacts with chlorophyll a. Trp-128 is a pheophytin a binding site. Residues Asp-172 and Glu-191 each contribute to the [CaMn4O5] cluster site. Residues 199 to 220 (FHILGVAGVFGGSLFSAMHGSL) form a helical membrane-spanning segment. Chlorophyll a is bound at residue His-200. Residues His-217 and 266–267 (SF) contribute to the a quinone site. His-217 is a binding site for Fe cation. Fe cation is bound at residue His-274. A helical membrane pass occupies residues 276–290 (FLAAWPVIGIWFTAL). [CaMn4O5] cluster is bound by residues His-334, Glu-335, and Asp-344.

Belongs to the reaction center PufL/M/PsbA/D family. As to quaternary structure, PSII is composed of 1 copy each of membrane proteins PsbA, PsbB, PsbC, PsbD, PsbE, PsbF, PsbH, PsbI, PsbJ, PsbK, PsbL, PsbM, PsbT, PsbX, PsbY, PsbZ, Psb30/Ycf12, at least 3 peripheral proteins of the oxygen-evolving complex and a large number of cofactors. It forms dimeric complexes. It depends on The D1/D2 heterodimer binds P680, chlorophylls that are the primary electron donor of PSII, and subsequent electron acceptors. It shares a non-heme iron and each subunit binds pheophytin, quinone, additional chlorophylls, carotenoids and lipids. D1 provides most of the ligands for the Mn4-Ca-O5 cluster of the oxygen-evolving complex (OEC). There is also a Cl(-1) ion associated with D1 and D2, which is required for oxygen evolution. The PSII complex binds additional chlorophylls, carotenoids and specific lipids. as a cofactor. Tyr-163 forms a radical intermediate that is referred to as redox-active TyrZ, YZ or Y-Z.

The protein resides in the plastid. The protein localises to the chloroplast thylakoid membrane. The catalysed reaction is 2 a plastoquinone + 4 hnu + 2 H2O = 2 a plastoquinol + O2. Its function is as follows. Photosystem II (PSII) is a light-driven water:plastoquinone oxidoreductase that uses light energy to abstract electrons from H(2)O, generating O(2) and a proton gradient subsequently used for ATP formation. It consists of a core antenna complex that captures photons, and an electron transfer chain that converts photonic excitation into a charge separation. The D1/D2 (PsbA/PsbD) reaction center heterodimer binds P680, the primary electron donor of PSII as well as several subsequent electron acceptors. The sequence is that of Photosystem II protein D1 from Alexandrium tamarense (Red tide dinoflagellate).